We begin with the raw amino-acid sequence, 846 residues long: Interleukin cytokine receptor-related protein 1 (846 aa).

An N-terminal signal peptide occupies residues methionine 1 to threonine 25. The Extracellular portion of the chain corresponds to glutamate 26 to threonine 418. Asparagine 29, asparagine 79, asparagine 186, asparagine 214, asparagine 339, and asparagine 395 each carry an N-linked (GlcNAc...) asparagine glycan. Positions glutamate 388–lysine 409 are disordered. Basic and acidic residues predominate over residues serine 400–lysine 409. The chain crosses the membrane as a helical span at residues tyrosine 419 to leucine 439. The Cytoplasmic portion of the chain corresponds to lysine 440–histidine 846. The region spanning serine 476–threonine 618 is the SEFIR domain. Residues glycine 737–serine 771 are disordered. The segment covering threonine 744–serine 771 has biased composition (acidic residues).

Component of a heterodimeric receptor complex composed of ilcr-1 and ilcr-2. The receptor complex interacts with actl-1 and ilc-17.1 with the interaction being mediated by ilcr-2. Expressed in most neurons.

It is found in the cell membrane. Its function is as follows. Forms a receptor complex together with receptor ilcr-2, which upon activation acts as a modulator of neuronal activity. Binding of the ligand ilc-17.1 to the ilcr-1/2 receptor complex triggers a signaling cascade that activates the downstream signaling components actl-1, pik-1 and nfki-1, and results in increased neuronal activity in RMG interneurons in response to input from oxygen-sensing neurons. This leads to increased animal movement and promotes aggregation behavior. The protein is Interleukin cytokine receptor-related protein 1 of Caenorhabditis elegans.